Here is a 334-residue protein sequence, read N- to C-terminus: Ornithine carbamoyltransferase (334 aa).

Residues 57-60 (STRT), Gln-84, Arg-108, and 135-138 (HPTQ) each bind carbamoyl phosphate. L-ornithine-binding positions include Asn-169, Asp-233, and 237 to 238 (SM). Carbamoyl phosphate contacts are provided by residues 275–276 (CL) and Arg-320.

The protein belongs to the aspartate/ornithine carbamoyltransferase superfamily. OTCase family.

The protein localises to the cytoplasm. The catalysed reaction is carbamoyl phosphate + L-ornithine = L-citrulline + phosphate + H(+). It participates in amino-acid biosynthesis; L-arginine biosynthesis; L-arginine from L-ornithine and carbamoyl phosphate: step 1/3. Functionally, reversibly catalyzes the transfer of the carbamoyl group from carbamoyl phosphate (CP) to the N(epsilon) atom of ornithine (ORN) to produce L-citrulline. This is Ornithine carbamoyltransferase from Vibrio vulnificus (strain YJ016).